Here is a 246-residue protein sequence, read N- to C-terminus: Mast cell protease 4 (246 aa).

An N-terminal signal peptide occupies residues 1–18 (MQALLFLMALLLPSGAGA). A propeptide spans 19 to 20 (EE) (activation peptide). Positions 21-244 (IIGGVESRPH…YVPWINRVIK (224 aa)) constitute a Peptidase S1 domain. Cys-50 and Cys-66 are disulfide-bonded. Residues His-65 and Asp-109 each act as charge relay system in the active site. 2 disulfide bridges follow: Cys-143–Cys-208 and Cys-174–Cys-187. Ser-202 (charge relay system) is an active-site residue.

Belongs to the peptidase S1 family. Granzyme subfamily. Monomer. Interacts with iripin-2, a serine protease inhibitor from Ixodes ricinus saliva. Submucosal mast cells. In femoral muscle, detected in myocytes but not in mast cells.

Completely inhibited by serine protease inhibitors such as chymostatin, diisopropylfluorophosphate and phenylmethylsulfonyl fluoride, but not by p-tosyl-L-phenylalanine chloromethyl ketone, p-tosyl-L-lysine chloromethyl ketone, pepstatin, E-64, EDTA or o-phenanthroline. Also inhibited by lima bean trypsin inhibitor, soy bean trypsin inhibitor and human plasma alpha1-antichymotrypsin. Has chymotrypsin-like activity. Hydrolyzes the amide bonds of synthetic substrates having Tyr and Phe residues at the P1 position. Preferentially hydrolyzes the 'Tyr-4-|-Ile-5' bond of angiotensin I and the 'Phe-20-|-Ala-21' bond of amyloid beta-protein, and is less active towards the 'Phe-8-|-His-9' bond of angiotensin I and the 'Phe-4-|-Ala-5' and 'Tyr-10-|-Glu-11' bonds of amyloid beta-protein. Involved in thrombin regulation and fibronectin processing. This is Mast cell protease 4 (Mcpt4) from Mus musculus (Mouse).